A 130-amino-acid polypeptide reads, in one-letter code: Small ribosomal subunit protein uS8 (130 aa).

This sequence belongs to the universal ribosomal protein uS8 family. In terms of assembly, part of the 30S ribosomal subunit. Contacts proteins S5 and S12.

In terms of biological role, one of the primary rRNA binding proteins, it binds directly to 16S rRNA central domain where it helps coordinate assembly of the platform of the 30S subunit. The chain is Small ribosomal subunit protein uS8 from Buchnera aphidicola subsp. Cinara cedri (strain Cc).